We begin with the raw amino-acid sequence, 414 residues long: MEDFAVSFWIYIGVMSIFVGGAVKKFLAFNIGAMPSVVVWLGATLLVERLCALCMPAVLARLVLCVCCWLYFTWATPKPSLPVEDKAVFITGCDSGFGNATAKKLDAMGFEVFATVLNLEGEGAKHLRKVCSSRLTLLQVDITQPQQVQQALLDTKAKLGIRDLWGLVNNAGWCVNIGDAELSLMSNYRGCMEVNFFGTVTVTRTFLPLLRQSKGRIVTISSPSGEHPFPCLASYGASKAALNLFINTLRHELDPWGVKVSTILPSAYKTGQSSNAEYWEKQYKSLLQGLSPNLLEEYGEEYLLETKELFQNYAKTANEDLSPVIDTIVEALLSPQPQVRYYAGPGLILMYFICSYLPLSISDRFLQKLFVQKKVMPRALIKQQGLSPNDNNNSIKENMNDSSSNNSNFTKCID.

Transmembrane regions (helical) follow at residues 3 to 23 (DFAV…GGAV), 26 to 46 (FLAF…ATLL), 52 to 72 (ALCM…WLYF), and 341 to 361 (YYAG…PLSI). Residues 382–414 (KQQGLSPNDNNNSIKENMNDSSSNNSNFTKCID) are disordered. The segment covering 384–397 (QGLSPNDNNNSIKE) has biased composition (polar residues).

The protein belongs to the short-chain dehydrogenases/reductases (SDR) family. In terms of tissue distribution, broadly expressed in peripheral (brain, gill, eye, heart, liver, head kidney, posterior kidney, and gut).

The protein resides in the membrane. It catalyses the reaction an 11beta-hydroxysteroid + NAD(+) = an 11-oxosteroid + NADH + H(+). The enzyme catalyses cortisol + NAD(+) = cortisone + NADH + H(+). The catalysed reaction is corticosterone + NAD(+) = 11-dehydrocorticosterone + NADH + H(+). It carries out the reaction 11beta,17beta-dihydroxyandrost-4-ene-3-one + NAD(+) = 17beta-hydroxyandrost-4-ene-3,11-dione + NADH + H(+). It catalyses the reaction 11beta-hydroxyandrost-4-ene-3,17-dione + NAD(+) = androst-4-ene-3,11,17-trione + NADH + H(+). Its pathway is steroid metabolism. Its function is as follows. Catalyzes the conversion of biologically active 11beta-hydroxyglucocorticoids (11beta-hydroxysteroid) such as cortisol, to inactive 11-ketoglucocorticoids (11-oxosteroid) such as cortisone, in the presence of NAD(+). Cortisol is the primary glucocorticoid in teleosts and is released to increase glucose bioavailability in order to meet the increased energy demands in response to stress. Functions as a dehydrogenase (oxidase), thereby decreasing the concentration of active glucocorticoids, regulating the hypothalamus-pituitary-interrenal (HPI) axis function in adult fish. Decreasing the excess glucocorticoids may be of relevance to brain function and neural proliferation. Plays a key role by catalyzing the oxidation of 11beta-hydroxytestosterone (11beta,17beta-dihydroxyandrost-4-ene-3-one) to 11-ketotestosterone (17beta-hydroxyandrost-4-ene-3,11-dione), the major fish androgen, that activates androgen receptor transcriptional activity. Catalyzes the conversion of 11beta-hydroxyandrostenedione (11beta-hydroxyandrost-4-ene-3,17-dione) to 11-ketoandrostenedione (androst-4-ene-3,11,17-trione), which can be further metabolized to 11-ketotestosterone. Exerts a dual role in fish by inactivating glucocorticoids and activating androgens. The polypeptide is 11-beta-hydroxysteroid dehydrogenase type 2 (hsd11b2) (Danio rerio (Zebrafish)).